We begin with the raw amino-acid sequence, 1333 residues long: ABC transporter ATP-binding protein/permease PDR18 (1333 aa).

A helical transmembrane segment spans residues 13-33; sequence FLEGQTFGDILCLPWTIIKGI. Residues 30–281 enclose the ABC transporter 1 domain; that stretch reads IKGIRERKNR…FENMGYLCPP (252 aa). N-linked (GlcNAc...) asparagine glycosylation is found at Asn48, Asn144, Asn205, and Asn350. 6 consecutive transmembrane segments (helical) span residues 392-412, 425-445, 474-494, 499-519, 534-554, and 642-662; these read YTVINTCAAIAQAFITGSLFY, SGVLFFSLLYYSLMGLANISF, FPFRMIGLTFFIIILYFLAGL, GAFFTMYLLLTMCSEAITSLF, SIAGVVMLSIAMYSTYMIQLP, and FGIMWCFLIGYIVLRAVFTEY. N-linked (GlcNAc...) asparagine glycosylation is found at Asn697 and Asn733. Positions 729–971 constitute an ABC transporter 2 domain; that stretch reads FIWKNVSFTI…VIKYFEKNGA (243 aa). 765–772 lines the ATP pocket; that stretch reads GESGAGKT. N-linked (GlcNAc...) asparagine glycosylation is present at Asn958. 6 helical membrane-spanning segments follow: residues 1071–1091, 1092–1112, 1150–1170, 1178–1198, 1210–1230, and 1235–1255; these read LLMISGLFIGFTFFHVGVNAI, GLQNSLFACFMAIVISAPATN, PYHLLFSTIFFVSSYFPLGVF, VFYLNYAILFQLYYIGLALMI, VIVGFILSFLLSFCGAVQPAS, and FWTFMWKLSPYTYFLQNLVGL. The N-linked (GlcNAc...) asparagine glycan is linked to Asn1320.

Belongs to the ABC transporter superfamily. ABCG family. PDR (TC 3.A.1.205) subfamily.

It is found in the membrane. This is ABC transporter ATP-binding protein/permease PDR18 (PDR18) from Saccharomyces cerevisiae (strain ATCC 204508 / S288c) (Baker's yeast).